We begin with the raw amino-acid sequence, 227 residues long: Prolactin (227 aa).

The first 28 residues, 1–28, serve as a signal peptide directing secretion; it reads MNIKGSPWKGSLLLLLVSNLLLCQSVAP. Cys32 and Cys39 form a disulfide bridge. The residue at position 54 (Ser54) is a Phosphoserine. N-linked (GlcNAc...) asparagine; partial glycosylation occurs at Asn59. Residues Ser62, Ser118, Ser163, and Ser194 each carry the phosphoserine modification. 2 disulfide bridges follow: Cys86-Cys202 and Cys219-Cys227.

The protein belongs to the somatotropin/prolactin family. Interacts with PRLR.

The protein resides in the secreted. Its function is as follows. Prolactin acts primarily on the mammary gland by promoting lactation. This Homo sapiens (Human) protein is Prolactin (PRL).